We begin with the raw amino-acid sequence, 369 residues long: GTPase Obg (369 aa).

An Obg domain is found at 1 to 159 (MKFVDEVTID…KNLKLELRVL (159 aa)). The region spanning 160–334 (ADVGLLGMPN…LIHAIYSHVA (175 aa)) is the OBG-type G domain. Residues 166-173 (GMPNAGKS), 191-195 (FTTLH), 213-216 (DIPG), 284-287 (NKLD), and 315-317 (SAL) each bind GTP. Mg(2+)-binding residues include serine 173 and threonine 193. Residues 339–369 (QPEEVPDPRFTTNEDLSEAAPAPDRDDPRFR) form a disordered region.

The protein belongs to the TRAFAC class OBG-HflX-like GTPase superfamily. OBG GTPase family. In terms of assembly, monomer. It depends on Mg(2+) as a cofactor.

The protein localises to the cytoplasm. In terms of biological role, an essential GTPase which binds GTP, GDP and possibly (p)ppGpp with moderate affinity, with high nucleotide exchange rates and a fairly low GTP hydrolysis rate. Plays a role in control of the cell cycle, stress response, ribosome biogenesis and in those bacteria that undergo differentiation, in morphogenesis control. In Leptothrix cholodnii (strain ATCC 51168 / LMG 8142 / SP-6) (Leptothrix discophora (strain SP-6)), this protein is GTPase Obg.